The sequence spans 108 residues: Dormancy-associated protein homolog 1 (108 aa).

The segment at 28–59 (DIKGVGEGSSSKTVAAVAGSPGTPTTPGSARK) is disordered. Position 47 is a phosphoserine (Ser47). Residue Thr50 is modified to Phosphothreonine.

This sequence belongs to the DRM1/ARP family. In terms of tissue distribution, expressed mainly in the low bolt.

This is Dormancy-associated protein homolog 1 from Arabidopsis thaliana (Mouse-ear cress).